The following is a 338-amino-acid chain: Glycerol-3-phosphate dehydrogenase [NAD(P)+] (338 aa).

NADPH is bound by residues Ser-13, Trp-14, and Lys-108. Residues Lys-108, Gly-139, and Ser-141 each contribute to the sn-glycerol 3-phosphate site. Ala-143 contacts NADPH. Sn-glycerol 3-phosphate contacts are provided by Lys-194, Asp-247, Ser-257, Arg-258, and Asn-259. The active-site Proton acceptor is the Lys-194. Arg-258 is a binding site for NADPH. Val-282 and Glu-284 together coordinate NADPH.

The protein belongs to the NAD-dependent glycerol-3-phosphate dehydrogenase family.

Its subcellular location is the cytoplasm. The catalysed reaction is sn-glycerol 3-phosphate + NAD(+) = dihydroxyacetone phosphate + NADH + H(+). It catalyses the reaction sn-glycerol 3-phosphate + NADP(+) = dihydroxyacetone phosphate + NADPH + H(+). It participates in membrane lipid metabolism; glycerophospholipid metabolism. Functionally, catalyzes the reduction of the glycolytic intermediate dihydroxyacetone phosphate (DHAP) to sn-glycerol 3-phosphate (G3P), the key precursor for phospholipid synthesis. In Streptococcus pneumoniae serotype 19F (strain G54), this protein is Glycerol-3-phosphate dehydrogenase [NAD(P)+].